Reading from the N-terminus, the 99-residue chain is uncharacterized protein (99 aa).

This is an uncharacterized protein from Micromonospora olivasterospora.